Here is a 630-residue protein sequence, read N- to C-terminus: Sodium-dependent serotonin transporter (630 aa).

Composition is skewed to polar residues over residues 1–11 (METTPLNSQKV) and 42–55 (QISNGYSAVPSTSA). The segment at 1 to 63 (METTPLNSQK…SAGDEAPHST (63 aa)) is disordered. The Cytoplasmic segment spans residues 1–87 (METTPLNSQK…ERETWGKKMD (87 aa)). Position 47 is a phosphotyrosine (Tyr-47). Residues 88 to 112 (FLLSVIGYAVDLGNIWRFPYICYQN) form a helical membrane-spanning segment. Na(+) contacts are provided by Gly-94, Ala-96, Val-97, Asp-98, and Asn-101. Asp-98 serves as a coordination point for serotonin. The Extracellular portion of the chain corresponds to 113-115 (GGG). A helical membrane pass occupies residues 116–135 (AFLLPYTIMAIFGGIPLFYM). At 136–160 (ELALGQYHRNGCISIWKKICPIFKG) the chain is on the cytoplasmic side. Tyr-142 carries the phosphotyrosine modification. Residues 161–186 (IGYAICIIAFYIASYYNTIIAWALYY) traverse the membrane as a helical segment. The Extracellular segment spans residues 187 to 252 (LISSFTDQLP…KGLQDLGTIS (66 aa)). A disulfide bridge connects residues Cys-200 and Cys-209. N-linked (GlcNAc...) asparagine glycans are attached at residues Asn-208 and Asn-217. A helical transmembrane segment spans residues 253-271 (WQLALCIMLIFTIIYFSIW). Residues 272–277 (KGVKTS) lie on the Cytoplasmic side of the membrane. Thr-276 carries the phosphothreonine modification. A helical transmembrane segment spans residues 278–297 (GKVVWVTATFPYIVLSVLLV). Topologically, residues 298-324 (RGATLPGAWRGVVFYLKPNWQKLLETG) are extracellular. Residues 325-347 (VWVDAAAQIFFSLGPGFGVLLAF) traverse the membrane as a helical segment. Ser-336 provides a ligand contact to Na(+). Residues 348–360 (ASYNKFNNNCYQD) are Cytoplasmic-facing. A helical membrane pass occupies residues 361–380 (ALVTSVVNCMTSFVSGFVIF). Na(+) is bound at residue Asn-368. The Extracellular segment spans residues 381 to 421 (TVLGYMAEMRNEDVSEVAKDAGPSLLFITYAEAIANMPAST). Residues 422-443 (FFAIIFFLMLITLGLDSTFAGL) traverse the membrane as a helical segment. Na(+)-binding residues include Leu-434, Asp-437, and Ser-438. A serotonin-binding site is contributed by Thr-439. At 444-463 (EGVITAVLDEFPHIWAKRRE) the chain is on the cytoplasmic side. The helical transmembrane segment at 464 to 483 (WFVLIVVITCILGSLLTLTS) threads the bilayer. The Extracellular segment spans residues 484–494 (GGAYVVTLLEE). Positions 494 and 495 each coordinate serotonin. The chain crosses the membrane as a helical span at residues 495–516 (YATGPAVLTVALIEAVVVSWFY). The Cytoplasmic portion of the chain corresponds to 517-538 (GITQFCSDVKEMLGFSPGWFWR). A helical transmembrane segment spans residues 539 to 558 (ICWVAISPLFLLFIICSFLM). The serotonin site is built by Phe-556 and Ser-559. The Extracellular portion of the chain corresponds to 559–574 (SPPQLRLFQYNYPHWS). The chain crosses the membrane as a helical span at residues 575-595 (IILGYCIGTSSVICIPIYIIY). At 596 to 630 (RLISTPGTLKERIIKSITPETPTEIPCGDIRMNAV) the chain is on the cytoplasmic side. The interval 616-624 (TPTEIPCGD) is interaction with RAB4A.

This sequence belongs to the sodium:neurotransmitter symporter (SNF) (TC 2.A.22) family. SLC6A4 subfamily. Monomer or homooligomer. Interacts (via C-terminus) with SCAMP2; the interaction is direct and retains transporter molecules intracellularly. Interacts with filamentous actin and STX1A. Interacts (via the N-terminus) with STX1A (via the H3 domain); this interaction regulates SLC4A6 channel conductance. Interacts with SEC23A, SEC24C and PATJ. Interacts with NOS1; the interaction may diminish the cell surface localization of SERT in the brain and, correspondingly, reduce serotonin reuptake. Interacts with TGFB1I1. Interacts with ITGAV:ITGB3. Interacts (via C-terminus) with ITGB3; this interaction regulates SLC6A4 trafficking. Post-translationally, phosphorylation at Thr-276 increases 5-HT uptake and is required for cGMP-mediated SERT regulation. Expressed in the lung, midbrain and brainstem regions. Expressed in brainstem raphe neurons.

Its subcellular location is the cell membrane. The protein resides in the endomembrane system. It localises to the endosome membrane. The protein localises to the synapse. It is found in the cell junction. Its subcellular location is the focal adhesion. The protein resides in the cell projection. It localises to the neuron projection. It catalyses the reaction serotonin(out) + K(+)(in) + Na(+)(out) + H(+)(in) = serotonin(in) + K(+)(out) + Na(+)(in) + H(+)(out). Its function is as follows. Serotonin transporter that cotransports serotonin with one Na(+) ion in exchange for one K(+) ion and possibly one proton in an overall electroneutral transport cycle. Transports serotonin across the plasma membrane from the extracellular compartment to the cytosol thus limiting serotonin intercellular signaling. Essential for serotonin homeostasis in the central nervous system. In the developing somatosensory cortex, acts in glutamatergic neurons to control serotonin uptake and its trophic functions accounting for proper spatial organization of cortical neurons and elaboration of sensory circuits. In the mature cortex, acts primarily in brainstem raphe neurons to mediate serotonin uptake from the synaptic cleft back into the pre-synaptic terminal thus terminating serotonin signaling at the synapse. Modulates mucosal serotonin levels in the gastrointestinal tract through uptake and clearance of serotonin in enterocytes. Required for enteric neurogenesis and gastrointestinal reflexes. Regulates blood serotonin levels by ensuring rapid high affinity uptake of serotonin from plasma to platelets, where it is further stored in dense granules via vesicular monoamine transporters and then released upon stimulation. Mechanistically, the transport cycle starts with an outward-open conformation having Na1(+) and Cl(-) sites occupied. The binding of a second extracellular Na2(+) ion and serotonin substrate leads to structural changes to outward-occluded to inward-occluded to inward-open, where the Na2(+) ion and serotonin are released into the cytosol. Binding of intracellular K(+) ion induces conformational transitions to inward-occluded to outward-open and completes the cycle by releasing K(+) possibly together with a proton bound to Asp-98 into the extracellular compartment. Na1(+) and Cl(-) ions remain bound throughout the transport cycle. Additionally, displays serotonin-induced channel-like conductance for monovalent cations, mainly Na(+) ions. The channel activity is uncoupled from the transport cycle and may contribute to the membrane resting potential or excitability. This Mus musculus (Mouse) protein is Sodium-dependent serotonin transporter.